The following is a 249-amino-acid chain: 2,3-bisphosphoglycerate-dependent phosphoglycerate mutase (249 aa).

Residues 9-16 (RHGQSQWN), 22-23 (TG), Arg61, 88-91 (ERHY), Lys99, 115-116 (RR), and 184-185 (GN) each bind substrate. His10 acts as the Tele-phosphohistidine intermediate in catalysis. Glu88 serves as the catalytic Proton donor/acceptor.

Belongs to the phosphoglycerate mutase family. BPG-dependent PGAM subfamily. As to quaternary structure, homodimer.

It carries out the reaction (2R)-2-phosphoglycerate = (2R)-3-phosphoglycerate. It participates in carbohydrate degradation; glycolysis; pyruvate from D-glyceraldehyde 3-phosphate: step 3/5. In terms of biological role, catalyzes the interconversion of 2-phosphoglycerate and 3-phosphoglycerate. The polypeptide is 2,3-bisphosphoglycerate-dependent phosphoglycerate mutase (Xanthomonas oryzae pv. oryzae (strain MAFF 311018)).